Here is a 226-residue protein sequence, read N- to C-terminus: Cytidylate kinase (226 aa).

10 to 18 (GPASSGKST) is a binding site for ATP.

The protein belongs to the cytidylate kinase family. Type 1 subfamily.

It is found in the cytoplasm. It catalyses the reaction CMP + ATP = CDP + ADP. The enzyme catalyses dCMP + ATP = dCDP + ADP. This chain is Cytidylate kinase, found in Streptococcus equi subsp. zooepidemicus (strain MGCS10565).